Here is a 1146-residue protein sequence, read N- to C-terminus: Inositol hexakisphosphate and diphosphoinositol-pentakisphosphate kinase (1146 aa).

Residues 1–33 are disordered; the sequence is MSGIKKEPIESDEVPQQETKNNLPSAPSEMSPL. A compositionally biased stretch (polar residues) spans 16 to 25; the sequence is QQETKNNLPS. A phosphoserine mark is found at S31, S54, and S77. Residues 93-185 form a disordered region; that stretch reads TALGNGNNTN…STSHPKPRLP (93 aa). The span at 96-106 shows a compositional bias: low complexity; the sequence is GNGNNTNTVTT. The segment covering 110–120 has biased composition (basic and acidic residues); the sequence is KKADSESKSEA. The segment covering 125–144 has biased composition (polar residues); it reads LSNSNIVNDADNINSISKTG. The segment covering 164-178 has biased composition (low complexity); sequence SVPTSSASSRKSSTS. 197–198 provides a ligand contact to substrate; that stretch reads AK. Residues R278, K351, H358, R377, 402 to 405, and 412 to 414 contribute to the ATP site; these read EQFM and DVK. 377-378 is a substrate binding site; sequence RK. Substrate-binding residues include K414 and R428. ATP is bound by residues S430, D475, and 487-489; that span reads DVN. A substrate-binding site is contributed by 492 to 495; that stretch reads SFVK. A polyphosphoinositide-binding domain region spans residues 530 to 597; it reads REEKEQKWVF…VLQALRIALD (68 aa). Residues S895 and S1107 each carry the phosphoserine modification. Positions 1106 to 1146 are disordered; it reads TSPNLSFQKRKTRRKSVSVEKLKRPASSGSSSSTSVNKTLD.

This sequence belongs to the histidine acid phosphatase family. VIP1 subfamily.

The protein localises to the cytoplasm. It is found in the cytoskeleton. It carries out the reaction 1D-myo-inositol hexakisphosphate + ATP = 1-diphospho-1D-myo-inositol 2,3,4,5,6-pentakisphosphate + ADP. The catalysed reaction is 5-diphospho-1D-myo-inositol 1,2,3,4,6-pentakisphosphate + ATP + H(+) = 1,5-bis(diphospho)-1D-myo-inositol 2,3,4,6-tetrakisphosphate + ADP. Its function is as follows. Bifunctional inositol kinase that acts in concert with the IP6K kinases to synthesize the diphosphate group-containing inositol pyrophosphates diphosphoinositol pentakisphosphate, PP-InsP5, and bis-diphosphoinositol tetrakisphosphate, (PP)2-InsP4. Phosphorylates inositol hexakisphosphate (InsP6) at position 1 to produce PP-InsP5 which is in turn phosphorylated by IP6Ks to produce (PP)2-InsP4. Alternatively, phosphorylates PP-InsP5 at position 1, produced by IP6Ks from InsP6, to produce (PP)2-InsP4. Required for maintaining cellular integrity, normal growth and interactions with the ARP complex. Acts as a regulator of the PHO80-PHO85 cyclin/cyclin-dependent kinase (CDK) complex, thereby regulating signaling of phosphate availability. Required for the function of the cortical actin cytoskeleton, possibly by participating in correct F-actin localization and ensuring polarized growth. Regulates polarized growth and modulates interphase microtubule cytoskeleton. Regulates microtubule dynamics without the requirement of microtubule plus-end tracking protein Mal3. Required for growth zone selection. This chain is Inositol hexakisphosphate and diphosphoinositol-pentakisphosphate kinase, found in Saccharomyces cerevisiae (strain ATCC 204508 / S288c) (Baker's yeast).